Consider the following 413-residue polypeptide: Tyrosine--tRNA ligase 2 (413 aa).

The 'HIGH' region motif lies at 58–67 (PSAPDVHLGH). 2 tandem repeats follow at residues 89–94 (GDFTGK) and 96–101 (GDPTGK). The tract at residues 89–101 (GDFTGKIGDPTGK) is 2 X 6 AA tandem repeats. The 'KMSKS' region signature appears at 242-246 (KMSKS). Residue lysine 245 coordinates ATP. Residues 353 to 413 (IAMIDLLVKL…VGKRKFLKLQ (61 aa)) form the S4 RNA-binding domain.

It belongs to the class-I aminoacyl-tRNA synthetase family. TyrS type 2 subfamily. In terms of assembly, homodimer.

The protein resides in the cytoplasm. It carries out the reaction tRNA(Tyr) + L-tyrosine + ATP = L-tyrosyl-tRNA(Tyr) + AMP + diphosphate + H(+). In terms of biological role, catalyzes the attachment of tyrosine to tRNA(Tyr) in a two-step reaction: tyrosine is first activated by ATP to form Tyr-AMP and then transferred to the acceptor end of tRNA(Tyr). The sequence is that of Tyrosine--tRNA ligase 2 from Bacillus subtilis (strain 168).